Consider the following 49-residue polypeptide: Large ribosomal subunit protein bL33 (49 aa).

The protein belongs to the bacterial ribosomal protein bL33 family.

The polypeptide is Large ribosomal subunit protein bL33 (Syntrophotalea carbinolica (strain DSM 2380 / NBRC 103641 / GraBd1) (Pelobacter carbinolicus)).